A 591-amino-acid polypeptide reads, in one-letter code: Probable anion transporter 4, chloroplastic (591 aa).

A disordered region spans residues Met-1–Arg-38. A chloroplast-targeting transit peptide spans Met-1–Val-76. Positions Ser-8–Pro-36 are enriched in polar residues. The next 11 membrane-spanning stretches (helical) occupy residues Val-184–Ile-204, Val-220–Ile-240, Val-249–Ala-269, Ile-271–Met-291, Leu-313–Ile-333, Phe-336–Trp-356, Val-402–Trp-422, Leu-440–Ala-460, Lys-475–Val-495, Ala-531–Ala-551, and Val-565–Thr-585.

This sequence belongs to the major facilitator superfamily. Sodium/anion cotransporter (TC 2.A.1.14) family.

It is found in the plastid. The protein resides in the chloroplast membrane. Functionally, probable anion transporter. This is Probable anion transporter 4, chloroplastic (PHT4;4) from Oryza sativa subsp. japonica (Rice).